A 328-amino-acid polypeptide reads, in one-letter code: Carbonic anhydrase-related protein 11 (328 aa).

The signal sequence occupies residues 1–23 (MGAAARLSAPRALVLWAALGAAA). Positions 33-303 (DWWSYKDNLQ…LAHRALRGNR (271 aa)) constitute an Alpha-carbonic anhydrase domain. N118, N170, and N260 each carry an N-linked (GlcNAc...) asparagine glycan. Positions 299-328 (LRGNRDPRHPERRCRGPNYRLHVDGVPHGR) are disordered. A compositionally biased stretch (basic and acidic residues) spans 319 to 328 (LHVDGVPHGR).

This sequence belongs to the alpha-carbonic anhydrase family. In terms of tissue distribution, expressed abundantly in the brain with moderate expression also present in spinal cord and thyroid.

It localises to the secreted. Does not have a catalytic activity. In Homo sapiens (Human), this protein is Carbonic anhydrase-related protein 11 (CA11).